A 107-amino-acid polypeptide reads, in one-letter code: Nitrogenase-stabilizing/protective protein NifW (107 aa).

This sequence belongs to the NifW family. Homotrimer; associates with NifD.

Its function is as follows. May protect the nitrogenase Fe-Mo protein from oxidative damage. This chain is Nitrogenase-stabilizing/protective protein NifW, found in Gloeothece citriformis (strain PCC 7424) (Cyanothece sp. (strain PCC 7424)).